Consider the following 223-residue polypeptide: Holliday junction branch migration complex subunit RuvA (223 aa).

The domain I stretch occupies residues 1-64 (MIGKLTGRLD…EDLLQLFGFL (64 aa)). Residues 65-143 (SPYEKEWHRL…AVMAMGGTLD (79 aa)) are domain II. The tract at residues 144-171 (DAMDDVVDDMPGESAAPAPAPQPRAPKR) is flexible linker. The segment at 148–177 (DVVDDMPGESAAPAPAPQPRAPKRPASNAQ) is disordered. The interval 172–223 (PASNAQAEALSALQNLGYGPSDAAQAVAQAAESASNTPELIRAALRLLAPKE) is domain III.

Belongs to the RuvA family. As to quaternary structure, homotetramer. Forms an RuvA(8)-RuvB(12)-Holliday junction (HJ) complex. HJ DNA is sandwiched between 2 RuvA tetramers; dsDNA enters through RuvA and exits via RuvB. An RuvB hexamer assembles on each DNA strand where it exits the tetramer. Each RuvB hexamer is contacted by two RuvA subunits (via domain III) on 2 adjacent RuvB subunits; this complex drives branch migration. In the full resolvosome a probable DNA-RuvA(4)-RuvB(12)-RuvC(2) complex forms which resolves the HJ.

The protein resides in the cytoplasm. In terms of biological role, the RuvA-RuvB-RuvC complex processes Holliday junction (HJ) DNA during genetic recombination and DNA repair, while the RuvA-RuvB complex plays an important role in the rescue of blocked DNA replication forks via replication fork reversal (RFR). RuvA specifically binds to HJ cruciform DNA, conferring on it an open structure. The RuvB hexamer acts as an ATP-dependent pump, pulling dsDNA into and through the RuvAB complex. HJ branch migration allows RuvC to scan DNA until it finds its consensus sequence, where it cleaves and resolves the cruciform DNA. The sequence is that of Holliday junction branch migration complex subunit RuvA from Jannaschia sp. (strain CCS1).